A 432-amino-acid chain; its full sequence is Enolase (432 aa).

Gln-163 contributes to the (2R)-2-phosphoglycerate binding site. Residue Glu-205 is the Proton donor of the active site. Mg(2+)-binding residues include Asp-242, Glu-285, and Asp-312. Positions 337, 366, 367, and 388 each coordinate (2R)-2-phosphoglycerate. The active-site Proton acceptor is Lys-337.

The protein belongs to the enolase family. It depends on Mg(2+) as a cofactor.

It localises to the cytoplasm. The protein localises to the secreted. Its subcellular location is the cell surface. The enzyme catalyses (2R)-2-phosphoglycerate = phosphoenolpyruvate + H2O. It functions in the pathway carbohydrate degradation; glycolysis; pyruvate from D-glyceraldehyde 3-phosphate: step 4/5. In terms of biological role, catalyzes the reversible conversion of 2-phosphoglycerate (2-PG) into phosphoenolpyruvate (PEP). It is essential for the degradation of carbohydrates via glycolysis. This is Enolase from Bifidobacterium longum subsp. infantis (strain ATCC 15697 / DSM 20088 / JCM 1222 / NCTC 11817 / S12).